Here is a 229-residue protein sequence, read N- to C-terminus: Potassium/proton antiporter CemA (229 aa).

3 helical membrane-spanning segments follow: residues Phe7 to Phe27, Leu114 to Leu134, and Ile189 to Ile209.

It belongs to the CemA family.

The protein localises to the plastid. Its subcellular location is the chloroplast inner membrane. It catalyses the reaction K(+)(in) + H(+)(out) = K(+)(out) + H(+)(in). Functionally, contributes to K(+)/H(+) antiport activity by supporting proton efflux to control proton extrusion and homeostasis in chloroplasts in a light-dependent manner to modulate photosynthesis. Prevents excessive induction of non-photochemical quenching (NPQ) under continuous-light conditions. Indirectly promotes efficient inorganic carbon uptake into chloroplasts. The sequence is that of Potassium/proton antiporter CemA from Ipomoea purpurea (Common morning glory).